A 120-amino-acid polypeptide reads, in one-letter code: Large ribosomal subunit protein uL18 (120 aa).

This sequence belongs to the universal ribosomal protein uL18 family. Part of the 50S ribosomal subunit; part of the 5S rRNA/L5/L18/L25 subcomplex. Contacts the 5S and 23S rRNAs.

This is one of the proteins that bind and probably mediate the attachment of the 5S RNA into the large ribosomal subunit, where it forms part of the central protuberance. In Rippkaea orientalis (strain PCC 8801 / RF-1) (Cyanothece sp. (strain PCC 8801)), this protein is Large ribosomal subunit protein uL18.